Consider the following 269-residue polypeptide: Expansin-B9 (269 aa).

A signal peptide spans 1 to 24 (MGSLTTNIVLAVAVVAALVGGGSC). N-linked (GlcNAc...) asparagine glycosylation occurs at N34. Residues 63–169 (GGACGIKNVN…RRVRCKYPGG (107 aa)) enclose the Expansin-like EG45 domain. Cystine bridges form between C66/C94, C97/C164, and C102/C108. The Expansin-like CBD domain occupies 183–264 (NYLAVLVKFV…NWMPDAIYVS (82 aa)).

The protein belongs to the expansin family. Expansin B subfamily.

Its subcellular location is the secreted. The protein localises to the cell wall. It localises to the membrane. May cause loosening and extension of plant cell walls by disrupting non-covalent bonding between cellulose microfibrils and matrix glucans. No enzymatic activity has been found. May be required for rapid internodal elongation in deepwater rice during submergence. In Oryza sativa subsp. japonica (Rice), this protein is Expansin-B9 (EXPB9).